The primary structure comprises 207 residues: HAAFTVAHEIGHLLGLSHDDSKFCEENFGSTEDKRLMSSILTSIDASKPWSKCTSATITEFLDDGHGNCLLDLPRKQIPGPEELPGQTYDASQQCNLTFGPEYSVCPGMDVCARLWCAVVRQGQMVCLTKKLPAVEGTPCGKGRICLQGKCVDKTKKKYYSTSSHGNWGSWGSWGQCSRSCGGGVQFAYRHCNNPAPKNNGRYCTGK.

In terms of domain architecture, Peptidase M12B spans 1–74 (HAAFTVAHEI…GHGNCLLDLP (74 aa)). H8 is a binding site for Zn(2+). The active site involves E9. 2 residues coordinate Zn(2+): H12 and H18. Intrachain disulfides connect C24-C53, C95-C117, C106-C127, C112-C146, and C140-C151. One can recognise a Disintegrin domain in the interval 83–164 (ELPGQTYDAS…TKKKYYSTSS (82 aa)). N96 carries N-linked (GlcNAc...) asparagine glycosylation. Positions 165 to 205 (HGNWGSWGSWGQCSRSCGGGVQFAYRHCNNPAPKNNGRYCT) constitute a TSP type-1 domain. C-linked (Man) tryptophan glycosylation is found at W168 and W171. Residue S180 is glycosylated (O-linked (Fuc...) serine).

It depends on Zn(2+) as a cofactor. The precursor is cleaved by furin and PCSK7 outside of the cell. In terms of processing, glycosylated. Can be O-fucosylated by POFUT2 on a serine or a threonine residue found within the consensus sequence C1-X(2)-(S/T)-C2-G of the TSP type-1 repeat domains where C1 and C2 are the first and second cysteine residue of the repeat, respectively. Fucosylated repeats can then be further glycosylated by the addition of a beta-1,3-glucose residue by the glucosyltransferase, B3GALTL. Fucosylation mediates the efficient secretion of ADAMTS family members. Can also be C-glycosylated with one or two mannose molecules on tryptophan residues within the consensus sequence W-X-X-W of the TPRs, and N-glycosylated. These other glycosylations can also facilitate secretion.

The protein localises to the secreted. It is found in the extracellular space. The protein resides in the extracellular matrix. Its function is as follows. Metalloproteinase that plays an important role in connective tissue organization, development, inflammation and cell migration. Extracellular matrix (ECM) degrading enzyme that shows proteolytic activity toward the hyalectan group of chondroitin sulfate proteoglycans (CSPGs) including ACAN, VCAN, BCAN and NCAN. Cleavage within the hyalectans occurs at Glu-Xaa recognition motifs. Plays a role in embryonic development, including limb and cardiac morphogenesis, and skeletal muscle development through its VCAN remodeling properties. Cleaves VCAN in the pericellular matrix surrounding myoblasts, facilitating myoblast contact and fusion which is required for skeletal muscle development and regeneration. Participates in the development of brown adipose tissue and browning of white adipose tissue. Plays an important role for T-lymphocyte migration from draining lymph nodes following viral infection. This Bos taurus (Bovine) protein is A disintegrin and metalloproteinase with thrombospondin motifs 5 (ADAMTS5).